Reading from the N-terminus, the 197-residue chain is Auxin-responsive protein IAA31 (197 aa).

2 disordered regions span residues 1-43 and 66-90; these read MENL…DQAK and SCLQPTTTTTKSKPPPAAAAAETQQ. The EAR-like (transcriptional repression) signature appears at 9–13; it reads LRLGL. Residues 99–186 enclose the PB1 domain; the sequence is GLFVKVSMDG…TCKRLRIMKG (88 aa).

It belongs to the Aux/IAA family. Homodimers and heterodimers. Highly expressed in etiolated seedlings. Expressed in roots.

The protein resides in the nucleus. In terms of biological role, aux/IAA proteins are short-lived transcriptional factors that function as repressors of early auxin response genes at low auxin concentrations. This Oryza sativa subsp. japonica (Rice) protein is Auxin-responsive protein IAA31 (IAA31).